We begin with the raw amino-acid sequence, 169 residues long: MYTSGYANRSSSFPTTTHNAALTATENAAAGLVSEVVYHEDQPMMAQLLLLPLLRQLGQQSRWQLWLTPQQKLSREWVQSSGLPLTKVMQISQLAPRHTLESMIRALRTGNYSVVIGWMTEELTEEEHASLVEAAKVGNAVGFIMRPVRAHALSRRQHSGLKIHSNLYH.

The tract at residues 106–112 (ALRTGNY) is ftsZ binding. A lon protease binding region spans residues 162-169 (KIHSNLYH).

The protein belongs to the SulA family. Interacts with FtsZ. In terms of processing, is rapidly cleaved and degraded by the Lon protease once DNA damage is repaired.

Its function is as follows. Component of the SOS system and an inhibitor of cell division. Accumulation of SulA causes rapid cessation of cell division and the appearance of long, non-septate filaments. In the presence of GTP, binds a polymerization-competent form of FtsZ in a 1:1 ratio, thus inhibiting FtsZ polymerization and therefore preventing it from participating in the assembly of the Z ring. This mechanism prevents the premature segregation of damaged DNA to daughter cells during cell division. The polypeptide is Cell division inhibitor SulA (Salmonella gallinarum (strain 287/91 / NCTC 13346)).